A 1372-amino-acid polypeptide reads, in one-letter code: DNA-directed RNA polymerase subunit beta' (1372 aa).

The Zn(2+) site is built by Cys69, Cys71, Cys84, and Cys87. 3 residues coordinate Mg(2+): Asp460, Asp462, and Asp464. Residues Cys808, Cys882, Cys889, and Cys892 each coordinate Zn(2+).

It belongs to the RNA polymerase beta' chain family. As to quaternary structure, the RNAP catalytic core consists of 2 alpha, 1 beta, 1 beta' and 1 omega subunit. When a sigma factor is associated with the core the holoenzyme is formed, which can initiate transcription. Mg(2+) serves as cofactor. The cofactor is Zn(2+).

The enzyme catalyses RNA(n) + a ribonucleoside 5'-triphosphate = RNA(n+1) + diphosphate. Functionally, DNA-dependent RNA polymerase catalyzes the transcription of DNA into RNA using the four ribonucleoside triphosphates as substrates. The protein is DNA-directed RNA polymerase subunit beta' of Rickettsia rickettsii (strain Iowa).